Here is a 461-residue protein sequence, read N- to C-terminus: Tubulin gamma chain (461 aa).

A142–G148 is a binding site for GTP.

This sequence belongs to the tubulin family.

It is found in the cytoplasm. Its subcellular location is the cytoskeleton. The protein localises to the microtubule organizing center. It localises to the spindle pole body. Tubulin is the major constituent of microtubules. The gamma chain is found at microtubule organizing centers (MTOC) such as the spindle poles or the centrosome, suggesting that it is involved in the minus-end nucleation of microtubule assembly. This is Tubulin gamma chain (tbg) from Neurospora crassa (strain ATCC 24698 / 74-OR23-1A / CBS 708.71 / DSM 1257 / FGSC 987).